The chain runs to 348 residues: Ribonuclease H (348 aa).

Positions 54–65 (NTTSNYGSSTHA) are enriched in polar residues. The segment at 54-81 (NTTSNYGSSTHAGGQVSKPHTTQKRVHR) is disordered. The region spanning 184–346 (YNKSMNVYCD…ADFLAKKGAS (163 aa)) is the RNase H type-1 domain. The Mg(2+) site is built by Asp-193, Glu-235, Asp-264, and Asp-338.

It belongs to the RNase H family. It depends on Mg(2+) as a cofactor.

It carries out the reaction Endonucleolytic cleavage to 5'-phosphomonoester.. Its function is as follows. Endonuclease that specifically degrades the RNA of RNA-DNA hybrids. In Saccharomyces cerevisiae (strain ATCC 204508 / S288c) (Baker's yeast), this protein is Ribonuclease H (RNH1).